A 126-amino-acid chain; its full sequence is Large ribosomal subunit protein bL20 (126 aa).

It belongs to the bacterial ribosomal protein bL20 family.

Its function is as follows. Binds directly to 23S ribosomal RNA and is necessary for the in vitro assembly process of the 50S ribosomal subunit. It is not involved in the protein synthesizing functions of that subunit. In Parafrankia sp. (strain EAN1pec), this protein is Large ribosomal subunit protein bL20.